We begin with the raw amino-acid sequence, 516 residues long: Maturase K (516 aa).

This sequence belongs to the intron maturase 2 family. MatK subfamily.

It localises to the plastid. The protein localises to the chloroplast. Usually encoded in the trnK tRNA gene intron. Probably assists in splicing its own and other chloroplast group II introns. This is Maturase K from Chara globularis (Fragile stonewort).